The primary structure comprises 74 residues: MASNKVSFFLVLCLCILLAGECIESPIFTGNKCSDPTGMDKDGKCLDYCHAQGYPGGSCIGFIDQGYMCVCKVG.

The first 22 residues, 1 to 22 (MASNKVSFFLVLCLCILLAGEC), serve as a signal peptide directing secretion. 3 cysteine pairs are disulfide-bonded: Cys33/Cys59, Cys45/Cys69, and Cys49/Cys71.

This sequence belongs to the DEFL family.

It localises to the secreted. The sequence is that of Putative defensin-like protein 36 from Arabidopsis thaliana (Mouse-ear cress).